The following is a 702-amino-acid chain: Ferrioxamine B receptor (702 aa).

An N-terminal signal peptide occupies residues 1 to 30; sequence MPLEMFMFATTRMALLIGGAIGGATFPLFA. Positions 55 to 168 constitute a TBDR plug domain; sequence PDIETPQSVS…PGGIVALTSR (114 aa). Positions 173-702 constitute a TBDR beta-barrel domain; the sequence is DAGGEVKLFA…SIVGSVSWAF (530 aa).

This sequence belongs to the TonB-dependent receptor family.

It localises to the cell outer membrane. Its function is as follows. Ferrioxamine binding and uptake, in association with the TonB protein. This Salmonella typhimurium (strain LT2 / SGSC1412 / ATCC 700720) protein is Ferrioxamine B receptor (foxA).